We begin with the raw amino-acid sequence, 454 residues long: Bifunctional protein GlmU (454 aa).

Residues 1 to 229 (MQRYAVVLAA…FDEIMGVNDR (229 aa)) are pyrophosphorylase. Residues 8–11 (LAAG), Lys22, Gln72, and 77–78 (GT) contribute to the UDP-N-acetyl-alpha-D-glucosamine site. Residue Asp102 coordinates Mg(2+). Positions 139, 154, and 227 each coordinate UDP-N-acetyl-alpha-D-glucosamine. Asn227 serves as a coordination point for Mg(2+). The tract at residues 230-250 (VALSKAEQAMRQRINEYHMRN) is linker. An N-acetyltransferase region spans residues 251-454 (GVTLIDPSST…KPGYLNKNKE (204 aa)). UDP-N-acetyl-alpha-D-glucosamine-binding residues include Arg332 and Lys350. His362 functions as the Proton acceptor in the catalytic mechanism. UDP-N-acetyl-alpha-D-glucosamine is bound by residues Tyr365 and Asn376. Acetyl-CoA-binding positions include 385–386 (NY), Ala422, and Arg439.

It in the N-terminal section; belongs to the N-acetylglucosamine-1-phosphate uridyltransferase family. The protein in the C-terminal section; belongs to the transferase hexapeptide repeat family. Homotrimer. Requires Mg(2+) as cofactor.

It localises to the cytoplasm. The enzyme catalyses alpha-D-glucosamine 1-phosphate + acetyl-CoA = N-acetyl-alpha-D-glucosamine 1-phosphate + CoA + H(+). It carries out the reaction N-acetyl-alpha-D-glucosamine 1-phosphate + UTP + H(+) = UDP-N-acetyl-alpha-D-glucosamine + diphosphate. The protein operates within nucleotide-sugar biosynthesis; UDP-N-acetyl-alpha-D-glucosamine biosynthesis; N-acetyl-alpha-D-glucosamine 1-phosphate from alpha-D-glucosamine 6-phosphate (route II): step 2/2. It functions in the pathway nucleotide-sugar biosynthesis; UDP-N-acetyl-alpha-D-glucosamine biosynthesis; UDP-N-acetyl-alpha-D-glucosamine from N-acetyl-alpha-D-glucosamine 1-phosphate: step 1/1. It participates in bacterial outer membrane biogenesis; LPS lipid A biosynthesis. Catalyzes the last two sequential reactions in the de novo biosynthetic pathway for UDP-N-acetylglucosamine (UDP-GlcNAc). The C-terminal domain catalyzes the transfer of acetyl group from acetyl coenzyme A to glucosamine-1-phosphate (GlcN-1-P) to produce N-acetylglucosamine-1-phosphate (GlcNAc-1-P), which is converted into UDP-GlcNAc by the transfer of uridine 5-monophosphate (from uridine 5-triphosphate), a reaction catalyzed by the N-terminal domain. This is Bifunctional protein GlmU from Staphylococcus carnosus (strain TM300).